The primary structure comprises 163 residues: NADH-quinone oxidoreductase subunit I (163 aa).

4Fe-4S ferredoxin-type domains follow at residues 53–83 and 94–123; these read LRRY…IEAG and VRYD…EGPN. [4Fe-4S] cluster-binding residues include C63, C66, C69, C73, C103, C106, C109, and C113.

The protein belongs to the complex I 23 kDa subunit family. NDH-1 is composed of 14 different subunits. Subunits NuoA, H, J, K, L, M, N constitute the membrane sector of the complex. It depends on [4Fe-4S] cluster as a cofactor.

It localises to the cell inner membrane. The enzyme catalyses a quinone + NADH + 5 H(+)(in) = a quinol + NAD(+) + 4 H(+)(out). Functionally, NDH-1 shuttles electrons from NADH, via FMN and iron-sulfur (Fe-S) centers, to quinones in the respiratory chain. The immediate electron acceptor for the enzyme in this species is believed to be ubiquinone. Couples the redox reaction to proton translocation (for every two electrons transferred, four hydrogen ions are translocated across the cytoplasmic membrane), and thus conserves the redox energy in a proton gradient. The protein is NADH-quinone oxidoreductase subunit I of Bartonella bacilliformis (strain ATCC 35685 / KC583 / Herrer 020/F12,63).